We begin with the raw amino-acid sequence, 205 residues long: Meiotic nuclear division protein 1 homolog (205 aa).

S2 bears the N-acetylserine mark. A coiled-coil region spans residues 83–173; that stretch reads KRKLEVLDSQ…EAANRWTDNI (91 aa).

This sequence belongs to the MND1 family. Heterodimer with PSMC3IP/HOP2. MND1-PSMC3IP interacts with DMC1 and RAD51 and binds preferentially to dsDNA.

The protein resides in the nucleus. In terms of biological role, required for proper homologous chromosome pairing and efficient cross-over and intragenic recombination during meiosis. Stimulates both DMC1- and RAD51-mediated homologous strand assimilation, which is required for the resolution of meiotic double-strand breaks. In Bos taurus (Bovine), this protein is Meiotic nuclear division protein 1 homolog.